The sequence spans 98 residues: NADH-ubiquinone oxidoreductase chain 4L (98 aa).

The next 3 membrane-spanning stretches (helical) occupy residues 1 to 21, 29 to 49, and 59 to 79; these read MTLI…GFLM, ALLC…LTVL, and MPII…ALLV.

This sequence belongs to the complex I subunit 4L family. Core subunit of respiratory chain NADH dehydrogenase (Complex I) which is composed of 45 different subunits.

It localises to the mitochondrion inner membrane. It carries out the reaction a ubiquinone + NADH + 5 H(+)(in) = a ubiquinol + NAD(+) + 4 H(+)(out). Functionally, core subunit of the mitochondrial membrane respiratory chain NADH dehydrogenase (Complex I) which catalyzes electron transfer from NADH through the respiratory chain, using ubiquinone as an electron acceptor. Part of the enzyme membrane arm which is embedded in the lipid bilayer and involved in proton translocation. The sequence is that of NADH-ubiquinone oxidoreductase chain 4L (MT-ND4L) from Inia geoffrensis (Amazon river dolphin).